The primary structure comprises 391 residues: Digeranylgeranylglycerophospholipid reductase (391 aa).

FAD contacts are provided by glycine 19, aspartate 38, cysteine 49, alanine 50, alanine 52, arginine 99, valine 123, aspartate 279, glycine 291, and isoleucine 292. Valine 369 lines the a 2,3-bis-O-(geranylgeranyl)-sn-glycerol 1-phospholipid pocket.

The protein belongs to the geranylgeranyl reductase family. DGGGPL reductase subfamily. It depends on FAD as a cofactor.

It carries out the reaction a 2,3-bis-O-phytanyl-sn-glycerol 1-phospholipid + 8 A = a 2,3-bis-O-(geranylgeranyl)-sn-glycerol 1-phospholipid + 8 AH2. The catalysed reaction is 2,3-bis-O-(phytanyl)-sn-glycerol 1-phosphate + 8 A = 2,3-bis-O-(geranylgeranyl)-sn-glycerol 1-phosphate + 8 AH2. It catalyses the reaction CDP-2,3-bis-O-(geranylgeranyl)-sn-glycerol + 8 AH2 = CDP-2,3-bis-O-(phytanyl)-sn-glycerol + 8 A. The enzyme catalyses archaetidylserine + 8 AH2 = 2,3-bis-O-phytanyl-sn-glycero-3-phospho-L-serine + 8 A. It participates in membrane lipid metabolism; glycerophospholipid metabolism. In terms of biological role, is involved in the reduction of 2,3-digeranylgeranylglycerophospholipids (unsaturated archaeols) into 2,3-diphytanylglycerophospholipids (saturated archaeols) in the biosynthesis of archaeal membrane lipids. Catalyzes the formation of archaetidic acid (2,3-di-O-phytanyl-sn-glyceryl phosphate) from 2,3-di-O-geranylgeranylglyceryl phosphate (DGGGP) via the hydrogenation of each double bond of the isoprenoid chains. Is also probably able to reduce double bonds of geranyl groups in CDP-2,3-bis-O-(geranylgeranyl)-sn-glycerol and archaetidylserine, thus acting at various stages in the biosynthesis of archaeal membrane lipids. The protein is Digeranylgeranylglycerophospholipid reductase of Methanococcus aeolicus (strain ATCC BAA-1280 / DSM 17508 / OCM 812 / Nankai-3).